A 427-amino-acid polypeptide reads, in one-letter code: Enolase (427 aa).

A (2R)-2-phosphoglycerate-binding site is contributed by Q163. The active-site Proton donor is the E205. D242, E285, and D312 together coordinate Mg(2+). Residues K337, R366, S367, and K388 each coordinate (2R)-2-phosphoglycerate. K337 (proton acceptor) is an active-site residue.

This sequence belongs to the enolase family. The cofactor is Mg(2+).

It is found in the cytoplasm. The protein resides in the secreted. The protein localises to the cell surface. It catalyses the reaction (2R)-2-phosphoglycerate = phosphoenolpyruvate + H2O. The protein operates within carbohydrate degradation; glycolysis; pyruvate from D-glyceraldehyde 3-phosphate: step 4/5. Functionally, catalyzes the reversible conversion of 2-phosphoglycerate (2-PG) into phosphoenolpyruvate (PEP). It is essential for the degradation of carbohydrates via glycolysis. The polypeptide is Enolase (Bradyrhizobium diazoefficiens (strain JCM 10833 / BCRC 13528 / IAM 13628 / NBRC 14792 / USDA 110)).